Consider the following 341-residue polypeptide: Inner membrane ABC transporter permease protein YejE (341 aa).

The Cytoplasmic segment spans residues 1–21 (MSRLSPVNQARWARFRHNRRG). Residues 22–42 (YWSLWIFLVLFGLSLCSELIA) form a helical membrane-spanning segment. Over 43–143 (NDKPLLVRYD…ARILYGTRIS (101 aa)) the chain is Periplasmic. One can recognise an ABC transmembrane type-1 domain in the interval 140–332 (TRISVLFGLM…LLIFIGEAVR (193 aa)). A helical transmembrane segment spans residues 144 to 164 (VLFGLMLTLCSSVMGVLAGAL). Topologically, residues 165 to 178 (QGYYGGKVDLWGQR) are cytoplasmic. Residues 179–199 (FIEVWSGMPTLFLIILLSSVV) traverse the membrane as a helical segment. The Periplasmic segment spans residues 200–201 (QP). The chain crosses the membrane as a helical span at residues 202-222 (NFWWLLAITVLFGWMSLVGVV). Over 223 to 252 (RAEFLRTRNFDYIRAAQALGVSDRSIILRH) the chain is Cytoplasmic. A helical membrane pass occupies residues 253 to 273 (MLPNAMVATLTFLPFILCSSI). Topologically, residues 274–307 (TTLTSLDFLGFGLPLGSPSLGELLLQGKNNLQAP) are periplasmic. The chain crosses the membrane as a helical span at residues 308–328 (WLGITAFLSVAILLSLLIFIG). Residues 329-341 (EAVRDAFDPNKAV) lie on the Cytoplasmic side of the membrane.

Belongs to the binding-protein-dependent transport system permease family. OppBC subfamily.

The protein localises to the cell inner membrane. In terms of biological role, probably part of a binding-protein-dependent transport system. Probably responsible for the translocation of the substrate across the membrane. The polypeptide is Inner membrane ABC transporter permease protein YejE (yejE) (Escherichia coli (strain K12)).